Here is a 325-residue protein sequence, read N- to C-terminus: HTH-type transcriptional regulator BbuR (325 aa).

The region spanning 15 to 72 (LDTDLLNVFCWVAKTQSFSRAAAELGTSQPVITRKIGRLEECLGVALFVRSNRGCVLT) is the HTH lysR-type domain. Residues 32–51 (FSRAAAELGTSQPVITRKIG) constitute a DNA-binding region (H-T-H motif).

Belongs to the LysR transcriptional regulatory family.

The protein is HTH-type transcriptional regulator BbuR (bbuR) of Bordetella bronchiseptica (strain ATCC BAA-588 / NCTC 13252 / RB50) (Alcaligenes bronchisepticus).